A 173-amino-acid chain; its full sequence is uncharacterized protein (173 aa).

Helical transmembrane passes span 9 to 29, 32 to 52, 100 to 120, and 127 to 147; these read FSIC…LLCV, ICSA…TFFH, MFLC…SFIV, and FLFL…GLYP.

Its subcellular location is the membrane. This is an uncharacterized protein from Saccharomyces cerevisiae (strain ATCC 204508 / S288c) (Baker's yeast).